The chain runs to 305 residues: Coiled-coil domain-containing protein 69-A (305 aa).

A lipid anchor (N-myristoyl glycine) is attached at Gly-2. Positions Leu-13–Thr-38 are disordered. Positions Gly-25–Thr-38 are enriched in polar residues. Residues Asn-42 to Arg-281 are a coiled coil.

This sequence belongs to the CCDC69 family.

It is found in the cytoplasm. Its subcellular location is the cytoskeleton. It localises to the spindle. The protein resides in the midbody. In terms of biological role, may act as a scaffold to regulate the recruitment and assembly of spindle midzone components. This chain is Coiled-coil domain-containing protein 69-A (ccdc69-a), found in Xenopus laevis (African clawed frog).